Consider the following 76-residue polypeptide: Large ribosomal subunit protein bL31 (76 aa).

Residues Cys16, Cys18, Cys36, and Cys39 each coordinate Zn(2+).

This sequence belongs to the bacterial ribosomal protein bL31 family. Type A subfamily. As to quaternary structure, part of the 50S ribosomal subunit. It depends on Zn(2+) as a cofactor.

Functionally, binds the 23S rRNA. The sequence is that of Large ribosomal subunit protein bL31 from Syntrophobacter fumaroxidans (strain DSM 10017 / MPOB).